The sequence spans 361 residues: Probable pectinesterase 50 (361 aa).

The N-terminal stretch at 1-22 (MGYISMSVVAFLVVFASPVVLA) is a signal peptide. Gln174 provides a ligand contact to substrate. Asp197 serves as the catalytic Proton donor. Asp218 acts as the Nucleophile in catalysis. Substrate-binding residues include Arg275 and Trp277.

The protein belongs to the pectinesterase family. Expressed in flower buds.

It is found in the secreted. Its subcellular location is the cell wall. The enzyme catalyses [(1-&gt;4)-alpha-D-galacturonosyl methyl ester](n) + n H2O = [(1-&gt;4)-alpha-D-galacturonosyl](n) + n methanol + n H(+). The protein operates within glycan metabolism; pectin degradation; 2-dehydro-3-deoxy-D-gluconate from pectin: step 1/5. Acts in the modification of cell walls via demethylesterification of cell wall pectin. This is Probable pectinesterase 50 (PME50) from Arabidopsis thaliana (Mouse-ear cress).